The following is a 355-amino-acid chain: Alanine racemase (355 aa).

Residue K37 is the Proton acceptor; specific for D-alanine of the active site. K37 is subject to N6-(pyridoxal phosphate)lysine. R129 lines the substrate pocket. Y251 (proton acceptor; specific for L-alanine) is an active-site residue. M299 is a substrate binding site.

The protein belongs to the alanine racemase family. The cofactor is pyridoxal 5'-phosphate.

It catalyses the reaction L-alanine = D-alanine. Its pathway is amino-acid biosynthesis; D-alanine biosynthesis; D-alanine from L-alanine: step 1/1. In terms of biological role, catalyzes the interconversion of L-alanine and D-alanine. May also act on other amino acids. This chain is Alanine racemase (alr), found in Deinococcus geothermalis (strain DSM 11300 / CIP 105573 / AG-3a).